The sequence spans 104 residues: Pyrimidine/purine nucleoside phosphorylase (104 aa).

Belongs to the nucleoside phosphorylase PpnP family.

The catalysed reaction is a purine D-ribonucleoside + phosphate = a purine nucleobase + alpha-D-ribose 1-phosphate. It catalyses the reaction adenosine + phosphate = alpha-D-ribose 1-phosphate + adenine. The enzyme catalyses cytidine + phosphate = cytosine + alpha-D-ribose 1-phosphate. It carries out the reaction guanosine + phosphate = alpha-D-ribose 1-phosphate + guanine. The catalysed reaction is inosine + phosphate = alpha-D-ribose 1-phosphate + hypoxanthine. It catalyses the reaction thymidine + phosphate = 2-deoxy-alpha-D-ribose 1-phosphate + thymine. The enzyme catalyses uridine + phosphate = alpha-D-ribose 1-phosphate + uracil. It carries out the reaction xanthosine + phosphate = alpha-D-ribose 1-phosphate + xanthine. Its function is as follows. Catalyzes the phosphorolysis of diverse nucleosides, yielding D-ribose 1-phosphate and the respective free bases. Can use uridine, adenosine, guanosine, cytidine, thymidine, inosine and xanthosine as substrates. Also catalyzes the reverse reactions. This Trichlorobacter lovleyi (strain ATCC BAA-1151 / DSM 17278 / SZ) (Geobacter lovleyi) protein is Pyrimidine/purine nucleoside phosphorylase.